A 1058-amino-acid polypeptide reads, in one-letter code: UPF0507 protein YALI0E18612g (1058 aa).

One can recognise a VPS9 domain in the interval 252-394 (TNEDGPLDQA…IGENREQLEA (143 aa)).

This sequence belongs to the UPF0507 family.

This is UPF0507 protein YALI0E18612g from Yarrowia lipolytica (strain CLIB 122 / E 150) (Yeast).